We begin with the raw amino-acid sequence, 407 residues long: Phosphopentomutase (407 aa).

The Mn(2+) site is built by D10, D306, H311, D347, H348, and H359.

Belongs to the phosphopentomutase family. It depends on Mn(2+) as a cofactor.

It localises to the cytoplasm. The enzyme catalyses 2-deoxy-alpha-D-ribose 1-phosphate = 2-deoxy-D-ribose 5-phosphate. It catalyses the reaction alpha-D-ribose 1-phosphate = D-ribose 5-phosphate. It functions in the pathway carbohydrate degradation; 2-deoxy-D-ribose 1-phosphate degradation; D-glyceraldehyde 3-phosphate and acetaldehyde from 2-deoxy-alpha-D-ribose 1-phosphate: step 1/2. Its function is as follows. Isomerase that catalyzes the conversion of deoxy-ribose 1-phosphate (dRib-1-P) and ribose 1-phosphate (Rib-1-P) to deoxy-ribose 5-phosphate (dRib-5-P) and ribose 5-phosphate (Rib-5-P), respectively. This is Phosphopentomutase from Serratia proteamaculans (strain 568).